A 158-amino-acid polypeptide reads, in one-letter code: Urease accessory protein UreE (158 aa).

The protein belongs to the UreE family.

It localises to the cytoplasm. Its function is as follows. Involved in urease metallocenter assembly. Binds nickel. Probably functions as a nickel donor during metallocenter assembly. This is Urease accessory protein UreE from Klebsiella pneumoniae (strain 342).